Reading from the N-terminus, the 345-residue chain is tRNA pseudouridine synthase B (345 aa).

Asp-39 functions as the Nucleophile in the catalytic mechanism.

This sequence belongs to the pseudouridine synthase TruB family. Type 1 subfamily.

The enzyme catalyses uridine(55) in tRNA = pseudouridine(55) in tRNA. In terms of biological role, responsible for synthesis of pseudouridine from uracil-55 in the psi GC loop of transfer RNAs. This chain is tRNA pseudouridine synthase B, found in Rickettsia africae (strain ESF-5).